We begin with the raw amino-acid sequence, 521 residues long: Solute carrier family 35 member F4 (521 aa).

The next 10 helical transmembrane spans lie at 160 to 180 (MVLK…SWVG), 192 to 212 (FYCP…FFPV), 248 to 266 (FLKR…NYLY), 277 to 297 (DVSA…WIVL), 301 to 321 (FMGV…MMAY), 330 to 350 (IIGV…KVLF), 365 to 385 (FVST…VILY), 395 to 417 (FAAL…NILV), 419 to 441 (VGVV…PGNA), and 450 to 470 (VIFN…FLLM). The 61-residue stretch at 261–321 (LTNYLYLLAL…AITGIVMMAY (61 aa)) folds into the EamA domain.

Belongs to the SLC35F solute transporter family.

The protein resides in the membrane. Functionally, putative solute transporter. In Homo sapiens (Human), this protein is Solute carrier family 35 member F4 (SLC35F4).